Reading from the N-terminus, the 425-residue chain is Pectate lyase L (425 aa).

An N-terminal signal peptide occupies residues 1 to 25 (MKYLNCFISTGLAAFFLVNSTSVLA). Cys28 and Cys114 form a disulfide bridge. Ca(2+) is bound by residues Asp209, Asp233, Asp234, and Asp237. The active-site Proton acceptor is the Lys273. Ca(2+)-binding residues include Asn402, Ser413, Ala416, Asp418, and Glu423.

This sequence belongs to the polysaccharide lyase 9 family. It depends on Ca(2+) as a cofactor.

The protein localises to the secreted. The catalysed reaction is Eliminative cleavage of (1-&gt;4)-alpha-D-galacturonan to give oligosaccharides with 4-deoxy-alpha-D-galact-4-enuronosyl groups at their non-reducing ends.. The protein operates within glycan metabolism; pectin degradation; 2-dehydro-3-deoxy-D-gluconate from pectin: step 2/5. Its function is as follows. Presents an endo-cleaving activity on polygalacturonate or partially methylated pectin. This is Pectate lyase L (pelL) from Dickeya chrysanthemi (Pectobacterium chrysanthemi).